We begin with the raw amino-acid sequence, 593 residues long: Arginine--tRNA ligase (593 aa).

The short motif at 138 to 148 (ANPTGPLHVGH) is the 'HIGH' region element.

This sequence belongs to the class-I aminoacyl-tRNA synthetase family. In terms of assembly, monomer.

The protein resides in the cytoplasm. The enzyme catalyses tRNA(Arg) + L-arginine + ATP = L-arginyl-tRNA(Arg) + AMP + diphosphate. This chain is Arginine--tRNA ligase, found in Burkholderia orbicola (strain MC0-3).